The chain runs to 119 residues: Large ribosomal subunit protein uL18 (119 aa).

It belongs to the universal ribosomal protein uL18 family. Part of the 50S ribosomal subunit; part of the 5S rRNA/L5/L18/L25 subcomplex. Contacts the 5S and 23S rRNAs.

This is one of the proteins that bind and probably mediate the attachment of the 5S RNA into the large ribosomal subunit, where it forms part of the central protuberance. The chain is Large ribosomal subunit protein uL18 from Anaeromyxobacter sp. (strain Fw109-5).